A 256-amino-acid polypeptide reads, in one-letter code: Cysteine-rich repeat secretory protein 42 (256 aa).

The first 26 residues, 1–26 (MSSVFGSVHILAMIAIQLLLTHSVSS), serve as a signal peptide directing secretion. Gnk2-homologous domains follow at residues 33-136 (YLHH…SVAS) and 142-253 (YEND…LYPF).

It belongs to the cysteine-rich repeat secretory protein family.

The protein localises to the secreted. The sequence is that of Cysteine-rich repeat secretory protein 42 (CRRSP42) from Arabidopsis thaliana (Mouse-ear cress).